Reading from the N-terminus, the 298-residue chain is MVNAAIVVSSNRPNVLEQISSLFRDGKTRSLGEQWTLVSGQLKGTFEDAKDACNRISATENVDCNCLSEATFSTKKKLVVFDMDSTLIQQECIDELAAEAGIQKEVATITSLAMNGEIDFQESLRRRVSLLQGLSVDVINKVIGKITFTPGAKQLCHCLKQMGATLVVASGGFVPMAEYVKGQLDLDYAYANVLEFSDDGKFLTGKVQGAIVDGQRKASILREKREELGLNKLETMAVGDGANDLVMMAESGLGIAFKAKPKVQLLADSKINLPSLQNALYLLGIDEQQQKKLLENKN.

The Nucleophile role is filled by D82. Mg(2+)-binding residues include D82 and D84. The active-site Proton donor is the D84. Substrate-binding positions include E91, R127, 170 to 171, and K217; that span reads SG. Residue D240 coordinates Mg(2+). A substrate-binding site is contributed by N243.

The protein belongs to the HAD-like hydrolase superfamily. SerB family. Mg(2+) serves as cofactor.

It carries out the reaction O-phospho-L-serine + H2O = L-serine + phosphate. It catalyses the reaction O-phospho-D-serine + H2O = D-serine + phosphate. It participates in amino-acid biosynthesis; L-serine biosynthesis; L-serine from 3-phospho-D-glycerate: step 3/3. The protein is Probable phosphoserine phosphatase of Schizosaccharomyces pombe (strain 972 / ATCC 24843) (Fission yeast).